Reading from the N-terminus, the 255-residue chain is MVDPVAALCNFNVLEVIFSYLDLNDLSRCSQVCRSWHHFLNDENSDVWRWHCLHKLPKEAMKSDLLTSVSTYKTKLRAYFHAWSPNDCSRNVYIKPNGFTLHRNPVAQSTDAARAKIGFRHGRHAWEVIWEGPLGTVAVIGISTKDAALQCHGYVALLGSDDQSWGWNLVENHLLHNGDMQGSYPLLSNAPKYQVGERIRVILDCDDNTLSFEKNYEFLGVAFRGLPDKKLYPTVSAVYGNTEVSMVYLGTPLDG.

The 49-residue stretch at 3-51 (DPVAALCNFNVLEVIFSYLDLNDLSRCSQVCRSWHHFLNDENSDVWRWH) folds into the F-box domain. The B30.2/SPRY domain occupies 61–253 (MKSDLLTSVS…VSMVYLGTPL (193 aa)).

The protein belongs to the FBXO45/Fsn family. In terms of assembly, component of an E3 ubiquitin ligase complex composed of hiw and Fsn.

It is found in the synapse. It participates in protein modification; protein ubiquitination. Functionally, required in the presynaptic motoneuron to down-regulate the levels of wnd and restrain synaptic terminal growth at the neuromuscular junction (NMJ). The sequence is that of F-box/SPRY domain-containing protein 1 from Drosophila willistoni (Fruit fly).